A 560-amino-acid polypeptide reads, in one-letter code: Dimethylaniline monooxygenase [N-oxide-forming] 4 (560 aa).

FAD-binding positions include 9–13 (GAGVS), Glu-32, and 40–41 (LW). NADP(+) is bound by residues 60–61 (TN) and 195–198 (TGGD). A helical membrane pass occupies residues 510–530 (LSHYLIAWGAPVLLVSLLLIY).

The protein belongs to the FMO family. It depends on FAD as a cofactor.

Its subcellular location is the microsome membrane. The protein localises to the endoplasmic reticulum membrane. It carries out the reaction N,N-dimethylaniline + NADPH + O2 + H(+) = N,N-dimethylaniline N-oxide + NADP(+) + H2O. Functionally, this protein is involved in the oxidative metabolism of a variety of xenobiotics such as drugs and pesticides. The chain is Dimethylaniline monooxygenase [N-oxide-forming] 4 (Fmo4) from Mus musculus (Mouse).